The following is a 433-amino-acid chain: Serine hydroxymethyltransferase (433 aa).

Position 121–123 (121–123 (AHV)) interacts with (6S)-5,6,7,8-tetrahydrofolate. N6-(pyridoxal phosphate)lysine is present on Lys227. Glu243 is a binding site for (6S)-5,6,7,8-tetrahydrofolate.

The protein belongs to the SHMT family. As to quaternary structure, homodimer. It depends on pyridoxal 5'-phosphate as a cofactor.

It is found in the cytoplasm. It participates in amino-acid biosynthesis; glycine biosynthesis; glycine from L-serine: step 1/1. In terms of biological role, catalyzes the reversible interconversion of serine and glycine with a modified folate serving as the one-carbon carrier. Also exhibits a pteridine-independent aldolase activity toward beta-hydroxyamino acids, producing glycine and aldehydes, via a retro-aldol mechanism. This chain is Serine hydroxymethyltransferase, found in Saccharolobus islandicus (strain Y.N.15.51 / Yellowstone #2) (Sulfolobus islandicus).